The chain runs to 207 residues: Phenazine biosynthesis protein PhzD1 (207 aa).

The active-site Proton donor is the Asp-38. Residues Gln-78, Arg-87, Lys-122, and 151–155 each bind substrate; that span reads YAHVG.

It belongs to the isochorismatase family. As to quaternary structure, homodimer.

It catalyses the reaction (2S)-2-amino-4-deoxychorismate + H2O = (5S,6S)-6-amino-5-hydroxycyclohexa-1,3-diene-1-carboxyate + pyruvate. It participates in antibiotic biosynthesis; phenazine biosynthesis. Functionally, involved in the biosynthesis of the antibiotic phenazine, a nitrogen-containing heterocyclic molecule. PhzD1 (operon phzA1B1C1E1F1G1) has a role in the biosynthesis of the phenazine during planktonic growth. Catalyzes the hydrolysis of the vinyl ether functional group of 2-amino-2-deoxyisochorismate (ADIC), yielding pyruvate and trans-2,3-dihydro-3-hydroxyanthranilic acid (DHHA). Also able to act on isochorismate, chorismate and 4-amino-4-deoxychorismate (ADC) as substrates. The chain is Phenazine biosynthesis protein PhzD1 from Pseudomonas aeruginosa (strain ATCC 15692 / DSM 22644 / CIP 104116 / JCM 14847 / LMG 12228 / 1C / PRS 101 / PAO1).